Here is a 205-residue protein sequence, read N- to C-terminus: Protein N-terminal glutamine amidohydrolase (205 aa).

Residues cysteine 20, histidine 74, and aspartate 90 contribute to the active site.

The protein belongs to the NTAQ1 family. In terms of assembly, monomer.

The enzyme catalyses N-terminal L-glutaminyl-[protein] + H2O = N-terminal L-glutamyl-[protein] + NH4(+). In terms of biological role, mediates the side-chain deamidation of N-terminal glutamine residues to glutamate, an important step in N-end rule pathway of protein degradation. Conversion of the resulting N-terminal glutamine to glutamate renders the protein susceptible to arginylation, polyubiquitination and degradation as specified by the N-end rule. Does not act on substrates with internal or C-terminal glutamine and does not act on non-glutamine residues in any position. The polypeptide is Protein N-terminal glutamine amidohydrolase (tun) (Drosophila erecta (Fruit fly)).